A 225-amino-acid polypeptide reads, in one-letter code: MLRAGCQLLTQSTLPTGKTVGNSFALEFVRWRRKPRWLPVAKSKMFRVPERKKQSEEERTELMRLHNQYKTQLRSVRQFLREEVVRHEETSTADHIVLTPEQEEAEFQKCLDANAAWNAAIAKERDQRLAKKREEKVAYIQERLEAQQLREEERKEQANQRVLLEIERSKNYITRENLDAAIETALANPVDHNFAIDMAGNLYHGRSTSQLPDATPEPNQQVLSN.

It belongs to the mitochondrion-specific ribosomal protein mS26 family. As to quaternary structure, component of the mitochondrial ribosome small subunit (28S) which comprises a 12S rRNA and about 30 distinct proteins.

The protein resides in the mitochondrion. In Drosophila melanogaster (Fruit fly), this protein is Small ribosomal subunit protein mS26 (mRpS26).